The sequence spans 185 residues: Virulence membrane protein PagC (185 aa).

A signal peptide spans 1–23 (MKNIILSTLVITTSVLVVNVAQA).

Belongs to the outer membrane OOP (TC 1.B.6) superfamily. Ail family.

Its subcellular location is the cell outer membrane. In terms of biological role, essential for full virulence and survival within macrophages. The sequence is that of Virulence membrane protein PagC (pagC) from Salmonella typhimurium (strain LT2 / SGSC1412 / ATCC 700720).